Reading from the N-terminus, the 639-residue chain is Threonine--tRNA ligase (639 aa).

Residues 1–61 form the TGS domain; sequence MINITLKDGK…KEDSELEILT (61 aa). The catalytic stretch occupies residues 242-532; the sequence is DHRKLGKELD…LIEHFAGAFP (291 aa). 3 residues coordinate Zn(2+): Cys-333, His-384, and His-509.

Belongs to the class-II aminoacyl-tRNA synthetase family. In terms of assembly, homodimer. Zn(2+) serves as cofactor.

Its subcellular location is the cytoplasm. It catalyses the reaction tRNA(Thr) + L-threonine + ATP = L-threonyl-tRNA(Thr) + AMP + diphosphate + H(+). Functionally, catalyzes the attachment of threonine to tRNA(Thr) in a two-step reaction: L-threonine is first activated by ATP to form Thr-AMP and then transferred to the acceptor end of tRNA(Thr). Also edits incorrectly charged L-seryl-tRNA(Thr). The protein is Threonine--tRNA ligase of Clostridium tetani (strain Massachusetts / E88).